A 678-amino-acid polypeptide reads, in one-letter code: Protein distal antenna (678 aa).

Residues 7 to 58 (TKGKRPLRSLTPRDKIHAIQRIHDGESKASVARDIGVPESTLRGWCKNEDKL) enclose the HTH psq-type domain. Residues 34–54 (KASVARDIGVPESTLRGWCKN) constitute a DNA-binding region (H-T-H motif). Disordered regions lie at residues 232–310 (GAGN…GGPM), 344–381 (GVTSPPIRSSTPQHMSQLAQTPPIPSAPLTPSSTPSGS), 445–528 (KETE…TSEC), 541–592 (GMEA…DEEE), and 645–678 (NETPMIEKSALPEDSEEHAAEEEGSGRGKSRRRK). 2 stretches are compositionally biased toward polar residues: residues 241–254 (PSGQTPLQVQSPRS) and 349–363 (PIRSSTPQHMSQLAQ). Phosphoserine occurs at positions 251 and 254. The span at 372–381 (LTPSSTPSGS) shows a compositional bias: low complexity. Over residues 449–461 (TPSVRSLSSNEQN) the composition is skewed to polar residues. The span at 462–478 (PEADEATETDLDGEVEP) shows a compositional bias: acidic residues. Residues 495-508 (TPSQSPIAHSSGSR) show a composition bias toward polar residues. The segment covering 570–586 (NNNDVSASNNNNNNNSN) has biased composition (low complexity). The segment covering 657–667 (EDSEEHAAEEE) has biased composition (acidic residues).

In terms of assembly, homomers. Interacts with itself, danr, ey and dac to form a complex (or complexes) containing the RD factors. In terms of tissue distribution, coexpressed with danr in the presumptive distal antenna, but not in the leg imaginal disk. Both proteins are also expressed in the brain and the eye region of the eye-antenna disk. First detected in early L3 eye disks in cells surrounding the newly initiated MF. Levels are uniform and high anterior to the furrow, lower levels within and posterior to the furrow. Limited expression is seen in small groups of cells in leg and wing. These appear in the location of prominent sense organ progenitors at relatively late stages of disk development.

Its subcellular location is the nucleus. Its function is as follows. Probable transcription factor with a role in the retinal determination (RD) network. Regulates ato expression and is required for normal R8 induction and differentiation. Danr appears to repress Dan expression, but Dan is required for Danr expression anterior to the morphogenetic furrow (MF). Dan and Danr lie downstream of so and require dac function for highest levels of expression. Contributes to differentiation of antenna-specific characteristics; effector gene that acts downstream of homothorax (hth), Distal-less (Dll), cut (ct) and spineless (ss) genes to control differentiation of distal antennal structures. The sequence is that of Protein distal antenna from Drosophila melanogaster (Fruit fly).